The sequence spans 462 residues: Notoamide biosynthesis cluster protein O' (462 aa).

The next 3 helical transmembrane spans lie at Ile16–Met36, Ala55–Ile75, and Trp79–Val99. An N-linked (GlcNAc...) asparagine glycan is attached at Asn102. 4 helical membrane-spanning segments follow: residues Ser104–Thr124, Ala143–Val163, Ile173–Ala193, and Ile233–Tyr253. N-linked (GlcNAc...) asparagine glycosylation is present at Asn254. Helical transmembrane passes span Leu265 to Leu285, Met297 to Val317, Val343 to Gly363, and Ala404 to Tyr424. Residues Leu443–Asp462 form a disordered region. Residues Gly449–Asp462 show a composition bias toward basic and acidic residues.

Belongs to the unc-93 family.

Its subcellular location is the membrane. Part of the gene cluster that mediates the biosynthesis of notoamide, a fungal indole alkaloid that belongs to a family of natural products containing a characteristic bicyclo[2.2.2]diazaoctane core. The first step of notoamide biosynthesis involves coupling of L-proline and L-tryptophan by the bimodular NRPS notE', to produce cyclo-L-tryptophan-L-proline called brevianamide F. The reverse prenyltransferase notF' then acts as a deoxybrevianamide E synthase and converts brevianamide F to deoxybrevianamide E via reverse prenylation at C-2 of the indole ring leading to the bicyclo[2.2.2]diazaoctane core. Deoxybrevianamide E is further hydroxylated at C-6 of the indole ring, likely catalyzed by the cytochrome P450 monooxygenase notG', to yield 6-hydroxy-deoxybrevianamide E. 6-hydroxy-deoxybrevianamide E is a specific substrate of the prenyltransferase notC' for normal prenylation at C-7 to produce 6-hydroxy-7-prenyl-deoxybrevianamide, also called notoamide S. As the proposed pivotal branching point in notoamide biosynthesis, notoamide S can be diverted to notoamide E through an oxidative pyran ring closure putatively catalyzed by either notH' cytochrome P450 monooxygenase or the notD' FAD-linked oxidoreductase. This step would be followed by an indole 2,3-epoxidation-initiated pinacol-like rearrangement catalyzed by the notB' FAD-dependent monooxygenase leading to the formation of notoamide C and notoamide D. On the other hand notoamide S is converted to notoamide T by notH' (or notD'), a bifunctional oxidase that also functions as the intramolecular Diels-Alderase responsible for generation of (-)-notoamide T. To generate antipodal (+)-notoaminide T, notH (or notD) in Aspergillus strain MF297-2 is expected to catalyze a Diels-Alder reaction leading to the opposite stereochemistry. The remaining oxidoreductase notD' (or notH') likely catalyzes the oxidative pyran ring formation to yield (-)-stephacidin A. The FAD-dependent monooxygenase notI' is highly similar to notB' and is predicted to catalyze a similar conversion from (-)-stephacidin A to (+)-notoamide B via the 2,3-epoxidation of (-)-stephacidin A followed by a pinacol-type rearrangement. Finally, it remains unclear which enzyme could be responsible for the final hydroxylation steps leading to notoamide A and sclerotiamide. The function of notO' in the notoamide biosynthesis has not been determined yet. The polypeptide is Notoamide biosynthesis cluster protein O' (Aspergillus versicolor).